A 677-amino-acid chain; its full sequence is DNA ligase (677 aa).

Residues 35–39, 84–85, and Glu115 contribute to the NAD(+) site; these read DAVYD and SL. The active-site N6-AMP-lysine intermediate is Lys117. Arg138, Glu177, Lys296, and Lys320 together coordinate NAD(+). The Zn(2+) site is built by Cys414, Cys417, Cys432, and Cys437. Residues 599–677 form the BRCT domain; the sequence is NGILKLNGKT…ETQLLEILEE (79 aa).

It belongs to the NAD-dependent DNA ligase family. LigA subfamily. Requires Mg(2+) as cofactor. The cofactor is Mn(2+).

It catalyses the reaction NAD(+) + (deoxyribonucleotide)n-3'-hydroxyl + 5'-phospho-(deoxyribonucleotide)m = (deoxyribonucleotide)n+m + AMP + beta-nicotinamide D-nucleotide.. DNA ligase that catalyzes the formation of phosphodiester linkages between 5'-phosphoryl and 3'-hydroxyl groups in double-stranded DNA using NAD as a coenzyme and as the energy source for the reaction. It is essential for DNA replication and repair of damaged DNA. This chain is DNA ligase, found in Nostoc sp. (strain PCC 7120 / SAG 25.82 / UTEX 2576).